The primary structure comprises 163 residues: Large ribosomal subunit protein uL10 (163 aa).

This sequence belongs to the universal ribosomal protein uL10 family. In terms of assembly, part of the ribosomal stalk of the 50S ribosomal subunit. The N-terminus interacts with L11 and the large rRNA to form the base of the stalk. The C-terminus forms an elongated spine to which L12 dimers bind in a sequential fashion forming a multimeric L10(L12)X complex.

Functionally, forms part of the ribosomal stalk, playing a central role in the interaction of the ribosome with GTP-bound translation factors. This chain is Large ribosomal subunit protein uL10, found in Actinobacillus succinogenes (strain ATCC 55618 / DSM 22257 / CCUG 43843 / 130Z).